Here is a 293-residue protein sequence, read N- to C-terminus: Lymphocyte antigen 6 complex locus protein G6f (293 aa).

An N-terminal signal peptide occupies residues 1-19 (MAMVVFLLLYLCGHPQAAA). The region spanning 20–124 (DNIQTLYVPS…HKYQNWRVYD (105 aa)) is the Ig-like V-type domain. The Extracellular segment spans residues 20 to 237 (DNIQTLYVPS…APLPSWDVSW (218 aa)). Cys37 and Cys108 are oxidised to a cystine. A glycan (N-linked (GlcNAc...) asparagine) is linked at Asn90. Residues 238-258 (ILMLLFAAGQGVTIIALSIVI) traverse the membrane as a helical segment. Residues 259-293 (WRHQRAQGTQDREPSIPHFKPEVQVYENIHLARLR) lie on the Cytoplasmic side of the membrane. Tyr284 carries the phosphotyrosine modification.

In terms of assembly, homodimer; disulfide-linked. Interacts with GRB2 and GRB7 in a phosphorylation-dependent manner. In terms of processing, N-glycosylated.

The protein resides in the cell membrane. Its function is as follows. May play a role in the downstream signal transduction pathways involving GRB2 and GRB7. This Rattus norvegicus (Rat) protein is Lymphocyte antigen 6 complex locus protein G6f (Ly6g6f).